A 373-amino-acid chain; its full sequence is Saccharopine dehydrogenase [NAD(+), L-lysine-forming] (373 aa).

Ala2 bears the N-acetylalanine; partial mark. L-saccharopine is bound by residues Arg18 and Lys77. Lys77 (proton acceptor) is an active-site residue. His96 serves as the catalytic Proton donor. Gln101 is a binding site for L-saccharopine. Position 130 (Arg130) interacts with NAD(+). Positions 131 and 135 each coordinate L-saccharopine. NAD(+)-binding positions include 203–204 (GR), Asp227, Thr231, Tyr251, and Val278. A disulfide bond links Cys205 and Cys249. 279 to 281 (SAD) contributes to the L-saccharopine binding site. 318 to 321 (IDHL) contacts NAD(+). A Microbody targeting signal motif is present at residues 371–373 (SRL).

The protein belongs to the AlaDH/PNT family. In terms of assembly, monomer.

It localises to the peroxisome. It carries out the reaction L-saccharopine + NAD(+) + H2O = L-lysine + 2-oxoglutarate + NADH + H(+). Its pathway is amino-acid biosynthesis; L-lysine biosynthesis via AAA pathway; L-lysine from L-alpha-aminoadipate (fungal route): step 3/3. With respect to regulation, inhibited by p-chloromercuribenzoate and iodoacetate by modification of the active site cysteine residue. Inhibited by diethyl pyrocarbonate by modification of histidine residues. Inhibited by pyridoxal 5'-phosphate by modification of an essential lysine residue. In terms of biological role, catalyzes the NAD(+)-dependent cleavage of saccharopine to L-lysine and 2-oxoglutarate, the final step in the alpha-aminoadipate (AAA) pathway for lysine biosynthesis. The chain is Saccharopine dehydrogenase [NAD(+), L-lysine-forming] from Saccharomyces cerevisiae (strain ATCC 204508 / S288c) (Baker's yeast).